We begin with the raw amino-acid sequence, 178 residues long: Mediator of RNA polymerase II transcription subunit 30 (178 aa).

The tract at residues 1–22 (MSTPPLAASGMAPGPFAGPQAQ) is disordered. Residue Ser-2 is modified to N-acetylserine. Positions 10–22 (GMAPGPFAGPQAQ) are enriched in low complexity. Coiled-coil stretches lie at residues 70–94 (TYQDRLTKLQDNLRQLSVLFRKLRL) and 133–173 (RFAS…INAM).

This sequence belongs to the Mediator complex subunit 30 family. Component of the Mediator complex, which is composed of MED1, MED4, MED6, MED7, MED8, MED9, MED10, MED11, MED12, MED13, MED13L, MED14, MED15, MED16, MED17, MED18, MED19, MED20, MED21, MED22, MED23, MED24, MED25, MED26, MED27, MED29, MED30, MED31, CCNC, CDK8 and CDC2L6/CDK11. The MED12, MED13, CCNC and CDK8 subunits form a distinct module termed the CDK8 module. Mediator containing the CDK8 module is less active than Mediator lacking this module in supporting transcriptional activation. Individual preparations of the Mediator complex lacking one or more distinct subunits have been variously termed ARC, CRSP, DRIP, PC2, SMCC and TRAP. As to expression, expressed in brain, heart, kidney, liver, lung, pancreas, placenta and skeletal muscle.

The protein localises to the nucleus. Functionally, component of the Mediator complex, a coactivator involved in the regulated transcription of nearly all RNA polymerase II-dependent genes. Mediator functions as a bridge to convey information from gene-specific regulatory proteins to the basal RNA polymerase II transcription machinery. Mediator is recruited to promoters by direct interactions with regulatory proteins and serves as a scaffold for the assembly of a functional preinitiation complex with RNA polymerase II and the general transcription factors. The protein is Mediator of RNA polymerase II transcription subunit 30 (MED30) of Homo sapiens (Human).